We begin with the raw amino-acid sequence, 270 residues long: Diaminopimelate epimerase (270 aa).

Substrate-binding residues include N15, Q49, and N66. The active-site Proton donor is C75. Substrate contacts are provided by residues 76–77, N155, N187, and 204–205; these read GN and ER. C213 serves as the catalytic Proton acceptor. 214–215 contributes to the substrate binding site; the sequence is GS.

It belongs to the diaminopimelate epimerase family. In terms of assembly, homodimer.

The protein resides in the cytoplasm. It catalyses the reaction (2S,6S)-2,6-diaminopimelate = meso-2,6-diaminopimelate. Its pathway is amino-acid biosynthesis; L-lysine biosynthesis via DAP pathway; DL-2,6-diaminopimelate from LL-2,6-diaminopimelate: step 1/1. Catalyzes the stereoinversion of LL-2,6-diaminopimelate (L,L-DAP) to meso-diaminopimelate (meso-DAP), a precursor of L-lysine and an essential component of the bacterial peptidoglycan. The sequence is that of Diaminopimelate epimerase from Rickettsia typhi (strain ATCC VR-144 / Wilmington).